A 64-amino-acid polypeptide reads, in one-letter code: Alpha-mammal toxin Lqq5 (64 aa).

The region spanning 2–64 is the LCN-type CS-alpha/beta domain; it reads KDGYIVDDKN…VSIKEKGRCN (63 aa). Disulfide bonds link Cys12–Cys63, Cys16–Cys36, Cys22–Cys46, and Cys26–Cys48. Asn64 is subject to Asparagine amide.

This sequence belongs to the long (4 C-C) scorpion toxin superfamily. Sodium channel inhibitor family. Alpha subfamily. In terms of tissue distribution, expressed by the venom gland.

Its subcellular location is the secreted. Alpha toxins bind voltage-independently at site-3 of sodium channels (Nav) and inhibit the inactivation of the activated channels, thereby blocking neuronal transmission. Is active on mammals and bind with high affinity to rat brain synaptosome. Does not display phospholipid-binding activity. This is Alpha-mammal toxin Lqq5 from Leiurus quinquestriatus quinquestriatus (Egyptian scorpion).